Reading from the N-terminus, the 232-residue chain is DASH complex subunit DUO1 (232 aa).

2 disordered regions span residues 1-44 (MADE…GGMR) and 133-232 (ERRR…RGAK). Residues 128–171 (ELEAEERRRQEEVERRAAEAERRREEARRKAEEEERRRAAAAAA) adopt a coiled-coil conformation. Basic and acidic residues predominate over residues 133–165 (ERRRQEEVERRAAEAERRREEARRKAEEEERRR). 2 stretches are compositionally biased toward low complexity: residues 167 to 183 (AAAAAAAAPAGRSVGRG) and 191 to 213 (GSGLTRGASSSASGSETTRTTSG).

This sequence belongs to the DASH complex DUO1 family. Component of the DASH complex consisting of ASK1, DAD1, DAD2, DAD3, DAD4, DAM1, DUO1, HSK3, SPC19 and SPC34, with a stoichiometry of one copy of each subunit per complex. Multiple DASH complexes oligomerize to form a ring that encircles spindle microtubules and organizes the rod-like NDC80 complexes of the outer kinetochore. DASH complex oligomerization strengthens microtubule attachments. On cytoplasmic microtubules, DASH complexes appear to form patches instead of rings.

It is found in the nucleus. The protein localises to the cytoplasm. It localises to the cytoskeleton. The protein resides in the spindle pole. Its subcellular location is the chromosome. It is found in the centromere. The protein localises to the kinetochore. Component of the DASH complex that connects microtubules with kinetochores and couples microtubule depolymerisation to chromosome movement; it is involved in retrieving kinetochores to the spindle poles before their re-orientation on the spindle in early mitosis and allows microtubule depolymerization to pull chromosomes apart and resist detachment during anaphase. Kinetochores, consisting of a centromere-associated inner segment and a microtubule-contacting outer segment, play a crucial role in chromosome segregation by mediating the physical connection between centromeric DNA and microtubules. Kinetochores also serve as an input point for the spindle assembly checkpoint, which delays anaphase until all chromosomes have bioriented on the mitotic spindle. The polypeptide is DASH complex subunit DUO1 (Chaetomium thermophilum (strain DSM 1495 / CBS 144.50 / IMI 039719) (Thermochaetoides thermophila)).